A 359-amino-acid polypeptide reads, in one-letter code: Histidinol-phosphate aminotransferase (359 aa).

At K217 the chain carries N6-(pyridoxal phosphate)lysine.

This sequence belongs to the class-II pyridoxal-phosphate-dependent aminotransferase family. Histidinol-phosphate aminotransferase subfamily. In terms of assembly, homodimer. Requires pyridoxal 5'-phosphate as cofactor.

It catalyses the reaction L-histidinol phosphate + 2-oxoglutarate = 3-(imidazol-4-yl)-2-oxopropyl phosphate + L-glutamate. Its pathway is amino-acid biosynthesis; L-histidine biosynthesis; L-histidine from 5-phospho-alpha-D-ribose 1-diphosphate: step 7/9. The protein is Histidinol-phosphate aminotransferase of Salmonella newport (strain SL254).